The chain runs to 424 residues: CinA-like protein (424 aa).

It belongs to the CinA family.

The sequence is that of CinA-like protein from Shewanella woodyi (strain ATCC 51908 / MS32).